A 1096-amino-acid chain; its full sequence is Lysine-specific demethylase PHF2 (1096 aa).

A PHD-type zinc finger spans residues 5–56 (PVYCVCRLPYDVTRFMIECDACKDWFHGSCVGVEEEEAPDIDIYHCPNCEKT). Residues threonine 193 and threonine 246 each coordinate 2-oxoglutarate. Residues 197–353 (FSDTRMSSFV…MQMRAYEVER (157 aa)) enclose the JmjC domain. Residues histidine 249 and aspartate 251 each contribute to the Fe cation site. Positions 259, 266, 321, and 323 each coordinate 2-oxoglutarate. A Fe cation-binding site is contributed by tyrosine 321. 2 disordered regions span residues 447 to 634 (KAVR…KDNK) and 646 to 674 (GSKA…KPVR). The residue at position 474 (serine 474) is a Phosphoserine. Threonine 479 carries the phosphothreonine modification. The span at 503–518 (SKIPKPPKPPKPPRPP) shows a compositional bias: pro residues. Serine 539 carries the phosphoserine modification. 2 stretches are compositionally biased toward basic and acidic residues: residues 548-563 (LEAH…EPPK) and 578-624 (DVVH…KLEK). A Phosphoserine modification is found at serine 655. Residues 665–674 (FKEDKPKPVR) are compositionally biased toward basic and acidic residues. Residues serine 681 and serine 705 each carry the phosphoserine modification. Lysine 711 is covalently cross-linked (Glycyl lysine isopeptide (Lys-Gly) (interchain with G-Cter in SUMO2)). 3 disordered regions span residues 719 to 799 (TKPK…QGML), 817 to 846 (AGQA…KRLL), and 877 to 1078 (YPSL…MATA). The residue at position 720 (lysine 720) is an N6-acetyllysine. Tyrosine 728 carries the phosphotyrosine modification. Residues 729 to 757 (KSDDSSDEGSLHIDTDTKPGRNARVKKES) are compositionally biased toward basic and acidic residues. Phosphoserine is present on residues serine 730, serine 733, serine 734, and serine 738. A phosphoserine mark is found at serine 879, serine 882, and serine 899. The span at 916 to 925 (RQDRPVREGT) shows a compositional bias: basic and acidic residues. Residues 949-959 (SKKKKSAKRKL) are compositionally biased toward basic residues. 2 stretches are compositionally biased toward low complexity: residues 960–1009 (TPNT…EGSS) and 1027–1040 (TAAG…AGRT). Positions 1053–1065 (RRPSASSPNNNTA) are enriched in polar residues. Serine 1056 is modified (phosphoserine; by PKA).

The protein belongs to the JHDM1 histone demethylase family. JHDM1D subfamily. Component of the PHF2-ARID5B complex, at least composed of PHF2 and ARID5B. Interacts with HNF4A and NR1H4. Interacts with RELA. Post-translationally, phosphorylated by PKA on specific serine residues, leading to the formation of an active lysine demethylase complex. In terms of tissue distribution, widely expressed, including in liver (at protein level).

The protein resides in the nucleus. Its subcellular location is the nucleolus. It is found in the chromosome. The protein localises to the centromere. It localises to the kinetochore. The catalysed reaction is N(6),N(6)-dimethyl-L-lysyl(9)-[histone H3] + 2-oxoglutarate + O2 = N(6)-methyl-L-lysyl(9)-[histone H3] + formaldehyde + succinate + CO2. With respect to regulation, enzymatically inactive by itself, and become active following phosphorylation by PKA. Its function is as follows. Lysine demethylase that demethylates both histones and non-histone proteins. Enzymatically inactive by itself, and becomes active following phosphorylation by PKA: forms a complex with ARID5B and mediates demethylation of methylated ARID5B. Demethylation of ARID5B leads to target the PHF2-ARID5B complex to target promoters, where PHF2 mediates demethylation of dimethylated 'Lys-9' of histone H3 (H3K9me2), followed by transcription activation of target genes. The PHF2-ARID5B complex acts as a coactivator of HNF4A in liver. PHF2 is recruited to trimethylated 'Lys-4' of histone H3 (H3K4me3) at rDNA promoters and promotes expression of rDNA. Involved in the activation of toll-like receptor 4 (TLR4)-target inflammatory genes in macrophages by catalyzing the demethylation of trimethylated histone H4 lysine 20 (H4K20me3) at the gene promoters. The protein is Lysine-specific demethylase PHF2 of Homo sapiens (Human).